A 146-amino-acid polypeptide reads, in one-letter code: ATP synthase epsilon chain (146 aa).

This sequence belongs to the ATPase epsilon chain family. In terms of assembly, F-type ATPases have 2 components, CF(1) - the catalytic core - and CF(0) - the membrane proton channel. CF(1) has five subunits: alpha(3), beta(3), gamma(1), delta(1), epsilon(1). CF(0) has three main subunits: a, b and c.

It is found in the cell inner membrane. Its function is as follows. Produces ATP from ADP in the presence of a proton gradient across the membrane. The polypeptide is ATP synthase epsilon chain (Rhodospirillum centenum (strain ATCC 51521 / SW)).